The primary structure comprises 520 residues: GMP synthase [glutamine-hydrolyzing] (520 aa).

One can recognise a Glutamine amidotransferase type-1 domain in the interval Lys-9–Gln-202. The active-site Nucleophile is the Cys-86. Catalysis depends on residues His-176 and Glu-178. One can recognise a GMPS ATP-PPase domain in the interval Trp-203–Arg-395. Residue Ser-230–Ser-236 participates in ATP binding.

In terms of assembly, homodimer.

The enzyme catalyses XMP + L-glutamine + ATP + H2O = GMP + L-glutamate + AMP + diphosphate + 2 H(+). Its pathway is purine metabolism; GMP biosynthesis; GMP from XMP (L-Gln route): step 1/1. Functionally, catalyzes the synthesis of GMP from XMP. The protein is GMP synthase [glutamine-hydrolyzing] of Geobacter metallireducens (strain ATCC 53774 / DSM 7210 / GS-15).